The sequence spans 235 residues: 5'-methylthioadenosine/S-adenosylhomocysteine nucleosidase (235 aa).

The active-site Proton acceptor is glutamate 12. Residues glycine 78, methionine 153, and 174–175 (ME) each bind substrate. The active-site Proton donor is the aspartate 198.

Belongs to the PNP/UDP phosphorylase family. MtnN subfamily.

It catalyses the reaction S-adenosyl-L-homocysteine + H2O = S-(5-deoxy-D-ribos-5-yl)-L-homocysteine + adenine. It carries out the reaction S-methyl-5'-thioadenosine + H2O = 5-(methylsulfanyl)-D-ribose + adenine. The catalysed reaction is 5'-deoxyadenosine + H2O = 5-deoxy-D-ribose + adenine. The protein operates within amino-acid biosynthesis; L-methionine biosynthesis via salvage pathway; S-methyl-5-thio-alpha-D-ribose 1-phosphate from S-methyl-5'-thioadenosine (hydrolase route): step 1/2. Functionally, catalyzes the irreversible cleavage of the glycosidic bond in both 5'-methylthioadenosine (MTA) and S-adenosylhomocysteine (SAH/AdoHcy) to adenine and the corresponding thioribose, 5'-methylthioribose and S-ribosylhomocysteine, respectively. Also cleaves 5'-deoxyadenosine, a toxic by-product of radical S-adenosylmethionine (SAM) enzymes, into 5-deoxyribose and adenine. In Geobacillus kaustophilus (strain HTA426), this protein is 5'-methylthioadenosine/S-adenosylhomocysteine nucleosidase.